A 490-amino-acid polypeptide reads, in one-letter code: Acetyl-coenzyme A carboxylase carboxyl transferase subunit beta, chloroplastic (490 aa).

Residues 184 to 203 (LNSSENEGSSRRTRTKGSDL) are disordered. Residues 221–490 (LWVQCENCYG…PLNQKSSKIK (270 aa)) form the CoA carboxyltransferase N-terminal domain. Zn(2+) is bound by residues cysteine 225, cysteine 228, cysteine 244, and cysteine 247. Residues 225-247 (CENCYGLNYKKFLKSKMNICEQC) form a C4-type zinc finger.

Belongs to the AccD/PCCB family. In terms of assembly, acetyl-CoA carboxylase is a heterohexamer composed of biotin carboxyl carrier protein, biotin carboxylase and 2 subunits each of ACCase subunit alpha and ACCase plastid-coded subunit beta (accD). Zn(2+) is required as a cofactor.

It is found in the plastid. It localises to the chloroplast stroma. It carries out the reaction N(6)-carboxybiotinyl-L-lysyl-[protein] + acetyl-CoA = N(6)-biotinyl-L-lysyl-[protein] + malonyl-CoA. Its pathway is lipid metabolism; malonyl-CoA biosynthesis; malonyl-CoA from acetyl-CoA: step 1/1. In terms of biological role, component of the acetyl coenzyme A carboxylase (ACC) complex. Biotin carboxylase (BC) catalyzes the carboxylation of biotin on its carrier protein (BCCP) and then the CO(2) group is transferred by the transcarboxylase to acetyl-CoA to form malonyl-CoA. The chain is Acetyl-coenzyme A carboxylase carboxyl transferase subunit beta, chloroplastic from Solanum bulbocastanum (Wild potato).